We begin with the raw amino-acid sequence, 38 residues long: Photosystem I reaction center subunit IX (38 aa).

The chain crosses the membrane as a helical span at residues 4 to 24 (FLTTAPVVAAIWFTLTAGILI).

The protein belongs to the PsaJ family.

It is found in the cellular thylakoid membrane. May help in the organization of the PsaE and PsaF subunits. The sequence is that of Photosystem I reaction center subunit IX from Parasynechococcus marenigrum (strain WH8102).